The primary structure comprises 770 residues: Jhy protein (770 aa).

Disordered regions lie at residues 1 to 249 (MNKY…SKQY), 295 to 438 (TVQN…SFVS), 493 to 527 (HRHESPSQRAPQSDHHMNTHRSTKTKKPAKQPQAE), 595 to 647 (ESQL…KRDV), and 708 to 740 (DYAKTIPKPKPPNLPDQTAKKTKNSRHSEKEGG). Residues 57–71 (SWSDIKDQIQDKDME) are compositionally biased toward basic and acidic residues. Over residues 72 to 85 (PDSLEEDSPSETEE) the composition is skewed to acidic residues. The span at 112–134 (HQVEDKYSDLRYDPNWKNKREEG) shows a compositional bias: basic and acidic residues. Residues 218 to 229 (SGLSQYLKSSSS) are compositionally biased toward low complexity. Positions 295-314 (TVQNDKEVENTFMDPEDKWH) are enriched in basic and acidic residues. The segment covering 340 to 354 (RGQSSDAANGQQPSR) has biased composition (polar residues). Positions 355–370 (RTAKARVRKQRKHQKG) are enriched in basic residues. Positions 383-398 (QNNQNNPFQQPQNQRQ) are enriched in low complexity. Over residues 410 to 438 (AQTNASNPNLQDARTLTHNPKVTSDSFVS) the composition is skewed to polar residues. Basic and acidic residues predominate over residues 493-509 (HRHESPSQRAPQSDHHM). Composition is skewed to basic residues over residues 510–521 (NTHRSTKTKKPA) and 625–642 (GKRHRKRSSTKSSKLKGY).

In terms of tissue distribution, expressed in the brain, specifically in hypothalamus, pineal gland, and ependymal cells of the aqueduct of Sylvius, as well as in the choroid plexus of the third ventricle. Expressed in the ependymal cells lining the lateral ventricles (at protein level).

Required for the normal development of cilia in brain ependymal cells lining the ventricular surfaces. In Mus musculus (Mouse), this protein is Jhy protein.